Reading from the N-terminus, the 642-residue chain is Threonine--tRNA ligase (642 aa).

The TGS domain occupies 1 to 63; it reads MSEIVVTLPD…TDDCELVIVT (63 aa). Positions 242-533 are catalytic; that stretch reads DHRKLGQELD…LIEHFDGNFP (292 aa). Residues cysteine 334, histidine 385, and histidine 510 each contribute to the Zn(2+) site.

It belongs to the class-II aminoacyl-tRNA synthetase family. In terms of assembly, homodimer. The cofactor is Zn(2+).

Its subcellular location is the cytoplasm. The enzyme catalyses tRNA(Thr) + L-threonine + ATP = L-threonyl-tRNA(Thr) + AMP + diphosphate + H(+). Functionally, catalyzes the attachment of threonine to tRNA(Thr) in a two-step reaction: L-threonine is first activated by ATP to form Thr-AMP and then transferred to the acceptor end of tRNA(Thr). This chain is Threonine--tRNA ligase, found in Natronomonas pharaonis (strain ATCC 35678 / DSM 2160 / CIP 103997 / JCM 8858 / NBRC 14720 / NCIMB 2260 / Gabara) (Halobacterium pharaonis).